The following is a 970-amino-acid chain: Cullin-4B (970 aa).

The segment covering 1 to 14 (MSRSTRSKERREND) has biased composition (basic and acidic residues). Disordered stretches follow at residues 1 to 157 (MSRS…SFCL) and 189 to 211 (AEESSSSSSSSSPTAATSQQQQQ). Threonine 15 is modified (phosphothreonine). Serine 17 carries the post-translational modification Phosphoserine. Pro residues predominate over residues 36 to 57 (PPRPPYPPLLPPVFPPPTPPPQ). The segment covering 78–98 (SGFSSPNPSAASAAAQEVRSA) has biased composition (low complexity). A compositionally biased stretch (polar residues) spans 99–109 (TDGNTSTTPPT). Threonine 106 carries the phosphothreonine modification. Residue serine 110 is modified to Phosphoserine. Residues 112–115 (KKRK) carry the Nuclear localization signal motif. The segment covering 117–126 (NSSSSSSNSS) has biased composition (low complexity). Polar residues predominate over residues 146–155 (DSASPSTSSF). Residues serine 154 and serine 200 each carry the phosphoserine modification. The segment covering 192-211 (SSSSSSSSSPTAATSQQQQQ) has biased composition (low complexity). Threonine 202 is modified (phosphothreonine). A Glycyl lysine isopeptide (Lys-Gly) (interchain with G-Cter in ubiquitin) cross-link involves residue lysine 247. Serine 250 bears the Phosphoserine mark. One can recognise a Cullin neddylation domain in the interval 902–962 (DRQYQIDAAI…RDYMERDKEN (61 aa)). Lysine 916 participates in a covalent cross-link: Glycyl lysine isopeptide (Lys-Gly) (interchain with G-Cter in NEDD8).

The protein belongs to the cullin family. As to quaternary structure, component of multiple DCX (DDB1-CUL4-X-box) E3 ubiquitin-protein ligase complexes that seem to be formed of DDB1, CUL4A or CUL4B, RBX1 and a variable substrate recognition component which seems to belong to a protein family described as DCAF (Ddb1- and Cul4-associated factor) or CDW (CUL4-DDB1-associated WD40-repeat) proteins. Component of the DCX(DTL) complex with the putative substrate recognition component DTL. Component of the DCX(DDB2) complex with the putative substrate recognition component DDB2. Component of DCX complexes part of the DesCEND (destruction via C-end degrons) pathway, which contain either TRPC4AP or DCAF12 as substrate-recognition component. Component of the DCX(AMBRA1) complex with the substrate recognition component AMBRA1. Part of a complex with RBX1 and TIP120A/CAND1. Component of the DCX(WDR77) complex, composed of Cul4b, Ddb1, Wdr77 and Rbx1. Interacts with RBX1, GRWD1, MLST8, SMU1, TLE2, TLE3, DCAF1, DDA1, DCAF6, DCAF17, DDB2, DCAF8, TIP120A/CAND1 and TMEM113. Interacts with cyclin E (CCNE1 or CCNE2) and with importins alpha-1 (KPNA2), alpha-3 (KPNA4), alpha-5 (KPNA1) and beta-1 (KPNB1). May interact with WDR26, WDR51B, SNRNP40, WDR61, WDR76 and WDR5. Interacts (unneddylated form) with DCUN1D1, DCUN1D2, DCUN1D3, DCUN1D4 and DCUN1D5; these interactions promote the cullin neddylation. Post-translationally, neddylated. Deneddylated via its interaction with the COP9 signalosome (CSN) complex. As to expression, expressed in oocytes (at protein level).

The protein localises to the cytoplasm. Its subcellular location is the nucleus. It functions in the pathway protein modification; protein ubiquitination. Its function is as follows. Core component of multiple cullin-RING-based E3 ubiquitin-protein ligase complexes which mediate the ubiquitination and subsequent proteasomal degradation of target proteins. The functional specificity of the E3 ubiquitin-protein ligase complex depends on the variable substrate recognition subunit. CUL4B may act within the complex as a scaffold protein, contributing to catalysis through positioning of the substrate and the ubiquitin-conjugating enzyme. Plays a role as part of the E3 ubiquitin-protein ligase complex in polyubiquitination of CDT1, histone H2A, histone H3 and histone H4 in response to radiation-induced DNA damage. Targeted to UV damaged chromatin by DDB2 and may be important for DNA repair and DNA replication. A number of DCX complexes (containing either TRPC4AP or DCAF12 as substrate-recognition component) are part of the DesCEND (destruction via C-end degrons) pathway, which recognizes a C-degron located at the extreme C terminus of target proteins, leading to their ubiquitination and degradation. The DCX(AMBRA1) complex is a master regulator of the transition from G1 to S cell phase by mediating ubiquitination of phosphorylated cyclin-D (CCND1, CCND2 and CCND3). The DCX(AMBRA1) complex also acts as a regulator of Cul5-RING (CRL5) E3 ubiquitin-protein ligase complexes by mediating ubiquitination and degradation of Elongin-C (ELOC) component of CRL5 complexes. Required for ubiquitination of cyclin E (CCNE1 or CCNE2), and consequently, normal G1 cell cycle progression. Component of the DCX(WDR77) complex, which mediates ubiquitination and degradation of Irgm1 in intestinal cells. Regulates the mammalian target-of-rapamycin (mTOR) pathway involved in control of cell growth, size and metabolism. Specific CUL4B regulation of the mTORC1-mediated pathway is dependent upon 26S proteasome function and requires interaction between CUL4B and MLST8. With CUL4A, contributes to ribosome biogenesis. This chain is Cullin-4B, found in Mus musculus (Mouse).